A 387-amino-acid polypeptide reads, in one-letter code: 3-hydroxy-D-aspartate aldolase (387 aa).

At lysine 62 the chain carries N6-(pyridoxal phosphate)lysine. Residues glutamine 85, threonine 238, 256 to 257 (GS), and tyrosine 265 each bind pyridoxal 5'-phosphate. Mg(2+)-binding residues include histidine 355 and aspartate 357.

This sequence belongs to the DSD1 family. Homodimer. Pyridoxal 5'-phosphate is required as a cofactor. The cofactor is Mg(2+).

It catalyses the reaction (3S)-3-hydroxy-D-aspartate = glyoxylate + glycine. The catalysed reaction is (3R)-3-hydroxy-D-aspartate = glyoxylate + glycine. Its function is as follows. Catalyzes the condensation of glyoxylate and glycine into (2R,3S)-beta-hydroxyaspartate ((3S)-3-hydroxy-D-aspartate). Is essential for the growth of P.denitrificans in the presence of glycolate and glyoxylate since it functions in glyoxylate assimilation via the beta-hydroxyaspartate cycle (BHAC). Is also able to catalyze the reverse reaction in vitro, i.e. the cleavage of (3S)-3-hydroxy-D-aspartate, and that of D-threonine to a lesser extent. In Paracoccus denitrificans (strain Pd 1222), this protein is 3-hydroxy-D-aspartate aldolase.